The sequence spans 215 residues: Probable GTP-binding protein EngB (215 aa).

The EngB-type G domain maps to 26–200 (EGIEVAFAGR…RAKLDEWFAP (175 aa)). GTP is bound by residues 34 to 41 (GRSNAGKS), 61 to 65 (GRTQL), 79 to 82 (DLPG), 146 to 149 (TKAD), and 179 to 181 (FSS). 2 residues coordinate Mg(2+): Ser41 and Thr63.

It belongs to the TRAFAC class TrmE-Era-EngA-EngB-Septin-like GTPase superfamily. EngB GTPase family. Mg(2+) is required as a cofactor.

Its function is as follows. Necessary for normal cell division and for the maintenance of normal septation. This Aliivibrio fischeri (strain MJ11) (Vibrio fischeri) protein is Probable GTP-binding protein EngB.